We begin with the raw amino-acid sequence, 139 residues long: Classical arabinogalactan protein 3 (139 aa).

The signal sequence occupies residues Met-1 to Ala-21. Gln-22 is modified (pyrrolidone carboxylic acid). Positions Thr-30–Ala-115 are disordered. Pro residues-rich tracts occupy residues Ala-46–Thr-77 and Pro-97–Ala-107. Residue Asp-116 is the site of GPI-anchor amidated aspartate attachment. Residues Ser-117 to Ala-139 constitute a propeptide, removed in mature form.

It belongs to the classical AGP family. Post-translationally, O-glycosylated on the hydroxyproline residues. As to expression, expressed at a low level in roots.

It is found in the cell membrane. Functionally, proteoglycan that seems to be implicated in diverse developmental roles such as differentiation, cell-cell recognition, embryogenesis and programmed cell death. The polypeptide is Classical arabinogalactan protein 3 (AGP3) (Arabidopsis thaliana (Mouse-ear cress)).